The sequence spans 324 residues: Olfactory receptor 7G2 (324 aa).

Over 1–25 the chain is Extracellular; it reads MEARNQTAISKFLLLGLIEDPELQP. Asparagine 5 carries an N-linked (GlcNAc...) asparagine glycan. The helical transmembrane segment at 26–46 threads the bilayer; the sequence is VLFSLFLSMYLVTILGNLLIL. Residues 47 to 54 lie on the Cytoplasmic side of the membrane; that stretch reads LAVISDSH. The helical transmembrane segment at 55–75 threads the bilayer; it reads LHTPMYFFLSNLSFLDICLST. Residues 76–99 lie on the Extracellular side of the membrane; the sequence is TTIPKMLVNIQAQNRSITYSGCLT. A glycan (N-linked (GlcNAc...) asparagine) is linked at asparagine 89. Cysteine 97 and cysteine 189 are disulfide-bonded. A helical membrane pass occupies residues 100–120; the sequence is QICFVLFFAGLENCLLAAMAY. The Cytoplasmic portion of the chain corresponds to 121–139; sequence DRYVAICHPLRYTVIMNPR. A helical transmembrane segment spans residues 140 to 160; that stretch reads LCGLLILLSLLTSVVNALLLS. Topologically, residues 161 to 197 are extracellular; the sequence is LMVLRLSFCTDLEIPLFFCELAQVIQLTCSDTLINNI. A helical membrane pass occupies residues 198 to 217; that stretch reads LIYFAACIFGGVPLSGIILS. Residues 218-237 lie on the Cytoplasmic side of the membrane; the sequence is YTQITSCVLRMPSASGKHKA. Residues 238 to 258 traverse the membrane as a helical segment; that stretch reads VSTCGSHLSIVLLFYGAGLGV. Residues 259–271 are Extracellular-facing; the sequence is YISSVVTDSPRKT. A helical membrane pass occupies residues 272 to 292; sequence AVASVMYSVFPQMVNPFIYSL. Over 293–324 the chain is Cytoplasmic; the sequence is RNKDMKGTLRKFIGRIPSLLWCAICFGFRFLE.

Belongs to the G-protein coupled receptor 1 family.

It is found in the cell membrane. Odorant receptor. This Homo sapiens (Human) protein is Olfactory receptor 7G2 (OR7G2).